The chain runs to 641 residues: Choline O-acetyltransferase (641 aa).

The disordered stretch occupies residues 1 to 29 (MPILEKTPPKMAAKSPSSEEEPGLPKLPV). Ser17 is modified (phosphoserine). The Proton acceptor role is filled by His335. Ser366 bears the Phosphoserine mark. Residues 413–425 (GKTF…CSPD), Ser451, and Gln552 contribute to the CoA site. The disordered stretch occupies residues 619 to 641 (QSGMGKPLATKEKVTRPSQVHQP).

This sequence belongs to the carnitine/choline acetyltransferase family.

It carries out the reaction choline + acetyl-CoA = acetylcholine + CoA. Catalyzes the reversible synthesis of acetylcholine (ACh) from acetyl CoA and choline at cholinergic synapses. The sequence is that of Choline O-acetyltransferase (CHAT) from Sus scrofa (Pig).